Here is a 217-residue protein sequence, read N- to C-terminus: Probable GTP-binding protein EngB (217 aa).

The EngB-type G domain occupies 37–214; the sequence is AGIEVAFAGR…RAAMIRLLDE (178 aa). GTP is bound by residues 45–52, 72–76, 92–95, 159–162, and 193–195; these read GRSNVGKS, GRTQE, DMPG, TKAD, and TSS. Serine 52 and threonine 74 together coordinate Mg(2+).

It belongs to the TRAFAC class TrmE-Era-EngA-EngB-Septin-like GTPase superfamily. EngB GTPase family. It depends on Mg(2+) as a cofactor.

Necessary for normal cell division and for the maintenance of normal septation. This chain is Probable GTP-binding protein EngB, found in Rhodopseudomonas palustris (strain BisB5).